The sequence spans 153 residues: MSDDIFLVTGGAGYIGSHTVIELINHGIKVVIADNLSNSSYDAVARIEFIVKQHVSHFIKVDIRNEKELNQVFSNHKISGVIHFAALKAVGESTKIPLEYYDNNVSGTIALLNVCKSNNVKTIVFSSSATVYGDVTRFGDNSMIPIPEHCPME.

The galactowaldenase stretch occupies residues 1–153 (MSDDIFLVTG…IPIPEHCPME (153 aa)).

It in the N-terminal section; belongs to the NAD(P)-dependent epimerase/dehydratase family. This sequence in the C-terminal section; belongs to the aldose epimerase family. The cofactor is NAD(+).

It carries out the reaction UDP-alpha-D-glucose = UDP-alpha-D-galactose. It catalyses the reaction alpha-D-glucose = beta-D-glucose. It participates in carbohydrate metabolism; galactose metabolism. The protein operates within carbohydrate metabolism; hexose metabolism. Functionally, mutarotase converts alpha-aldose to the beta-anomer. It is active on D-glucose, L-arabinose, D-xylose, D-galactose, maltose and lactose. This chain is Bifunctional protein GAL10 (GAL10), found in Candida maltosa (Yeast).